Here is a 520-residue protein sequence, read N- to C-terminus: Probable glycine dehydrogenase (decarboxylating) subunit 2 (520 aa).

The tract at residues 1–29 (MWRQSRWNEPLITEMSRRGRRGALPPRPD) is disordered. The residue at position 279 (lysine 279) is an N6-(pyridoxal phosphate)lysine.

Belongs to the GcvP family. C-terminal subunit subfamily. The glycine cleavage system is composed of four proteins: P, T, L and H. In this organism, the P 'protein' is a heterodimer of two subunits. Pyridoxal 5'-phosphate is required as a cofactor.

It carries out the reaction N(6)-[(R)-lipoyl]-L-lysyl-[glycine-cleavage complex H protein] + glycine + H(+) = N(6)-[(R)-S(8)-aminomethyldihydrolipoyl]-L-lysyl-[glycine-cleavage complex H protein] + CO2. The glycine cleavage system catalyzes the degradation of glycine. The P protein binds the alpha-amino group of glycine through its pyridoxal phosphate cofactor; CO(2) is released and the remaining methylamine moiety is then transferred to the lipoamide cofactor of the H protein. The protein is Probable glycine dehydrogenase (decarboxylating) subunit 2 of Aeropyrum pernix (strain ATCC 700893 / DSM 11879 / JCM 9820 / NBRC 100138 / K1).